The primary structure comprises 507 residues: 3-octaprenyl-4-hydroxybenzoate carboxy-lyase (507 aa).

Mn(2+) is bound at residue asparagine 177. Prenylated FMN contacts are provided by residues 180–182 (IYR), 194–196 (RWL), and 199–200 (RG). Glutamate 243 lines the Mn(2+) pocket. Aspartate 302 acts as the Proton donor in catalysis.

The protein belongs to the UbiD family. In terms of assembly, homohexamer. Prenylated FMN is required as a cofactor. Mn(2+) serves as cofactor.

It is found in the cell membrane. It catalyses the reaction a 4-hydroxy-3-(all-trans-polyprenyl)benzoate + H(+) = a 2-(all-trans-polyprenyl)phenol + CO2. It participates in cofactor biosynthesis; ubiquinone biosynthesis. Catalyzes the decarboxylation of 3-octaprenyl-4-hydroxy benzoate to 2-octaprenylphenol, an intermediate step in ubiquinone biosynthesis. The polypeptide is 3-octaprenyl-4-hydroxybenzoate carboxy-lyase (Cupriavidus metallidurans (strain ATCC 43123 / DSM 2839 / NBRC 102507 / CH34) (Ralstonia metallidurans)).